The chain runs to 354 residues: Rhodopsin (354 aa).

At 1–36 (MNGTEGPNFYVPMSNKTGVVRSPFDYPQYYLAEPWQ) the chain is on the extracellular side. 2 N-linked (GlcNAc...) asparagine glycosylation sites follow: Asn-2 and Asn-15. Residues 37–61 (YSALAAYMFLLILLGLPINFMTLFV) form a helical membrane-spanning segment. Residues 62–73 (TIQHKKLRTPLN) lie on the Cytoplasmic side of the membrane. A helical membrane pass occupies residues 74–96 (YILLNLVFANHFMVLCGFTVTMY). At 97–110 (TSMHGYFIFGPTGC) the chain is on the extracellular side. A disulfide bond links Cys-110 and Cys-187. Residues 111–133 (YIEGFFATLGGEVALWSLVVLAV) traverse the membrane as a helical segment. A 'Ionic lock' involved in activated form stabilization motif is present at residues 134-136 (ERY). Residues 134 to 152 (ERYIVVCKPMANFRFGENH) lie on the Cytoplasmic side of the membrane. Residues 153–173 (AIMGVAFTWIMALSCAAPPLF) form a helical membrane-spanning segment. Over 174-202 (GWSRYIPEGMQCSCGVDYYTLKPEVNNES) the chain is Extracellular. Residues 203-224 (FVIYMFIVHFTIPLIVIFFCYG) form a helical membrane-spanning segment. At 225–252 (RLLCTVKEAAAQQQESLTTQKAEKEVTR) the chain is on the cytoplasmic side. Residues 253–274 (MVVIMVVFFLICWVPYAYVAFY) form a helical membrane-spanning segment. Residues 275–286 (IFTHQGSNFGPV) are Extracellular-facing. The helical transmembrane segment at 287–308 (FMTVPAFFAKSSAIYNPVIYIV) threads the bilayer. At Lys-296 the chain carries N6-(retinylidene)lysine. The Cytoplasmic segment spans residues 309–354 (LNKQFRNCLITTLCCGKNPFGDEDGSSAATSKTEASSVSSSQVSPA). S-palmitoyl cysteine attachment occurs at residues Cys-322 and Cys-323. The disordered stretch occupies residues 331-354 (EDGSSAATSKTEASSVSSSQVSPA). Over residues 334–354 (SSAATSKTEASSVSSSQVSPA) the composition is skewed to low complexity.

Belongs to the G-protein coupled receptor 1 family. Opsin subfamily. In terms of processing, contains one covalently linked retinal chromophore. Upon light absorption, the covalently bound 11-cis-retinal is converted to all-trans-retinal. After hydrolysis of the Schiff base and release of the covalently bound all-trans-retinal, active rhodopsin is regenerated by binding of a fresh molecule of 11-cis-retinal.

The protein resides in the membrane. It is found in the cell projection. It localises to the cilium. The protein localises to the photoreceptor outer segment. Its function is as follows. Photoreceptor required for image-forming vision at low light intensity. Required for photoreceptor cell viability after birth. Light-induced isomerization of 11-cis to all-trans retinal triggers a conformational change that activates signaling via G-proteins. Subsequent receptor phosphorylation mediates displacement of the bound G-protein alpha subunit by arrestin and terminates signaling. The chain is Rhodopsin (rho) from Xenopus laevis (African clawed frog).